The chain runs to 217 residues: Ras-related protein RABA1e (217 aa).

Residue 20–27 (GDSGVGKS) coordinates GTP. The Effector region signature appears at 42–50 (SKSTIGVEF). GTP contacts are provided by residues 68-72 (DTAGQ), 126-129 (NKAD), and 156-157 (SA). Residues cysteine 214 and cysteine 215 are each lipidated (S-geranylgeranyl cysteine).

The protein belongs to the small GTPase superfamily. Rab family.

The protein resides in the cell membrane. Functionally, intracellular vesicle trafficking and protein transport. In Arabidopsis thaliana (Mouse-ear cress), this protein is Ras-related protein RABA1e (RABA1E).